The chain runs to 274 residues: Large ribosomal subunit protein uL2 (274 aa).

The tract at residues 224-256 (VMNPVDHPHGGGEGKTGEGRHPVDPWGNLTKGY) is disordered. Residues 229–246 (DHPHGGGEGKTGEGRHPV) are compositionally biased toward basic and acidic residues.

This sequence belongs to the universal ribosomal protein uL2 family. As to quaternary structure, part of the 50S ribosomal subunit. Forms a bridge to the 30S subunit in the 70S ribosome.

Its function is as follows. One of the primary rRNA binding proteins. Required for association of the 30S and 50S subunits to form the 70S ribosome, for tRNA binding and peptide bond formation. It has been suggested to have peptidyltransferase activity; this is somewhat controversial. Makes several contacts with the 16S rRNA in the 70S ribosome. The chain is Large ribosomal subunit protein uL2 from Polaromonas naphthalenivorans (strain CJ2).